We begin with the raw amino-acid sequence, 598 residues long: Fumarate reductase flavoprotein subunit (598 aa).

Residues G12–A16, I36–K38, S44–G52, H156–V158, and D212 each bind FAD. At H45 the chain carries Tele-8alpha-FAD histidine. Residues H233 and R249 contribute to the active site. FAD contacts are provided by residues H356–Y357, E380, and R391–L397. The disordered stretch occupies residues A577–G598. Over residues A587–G598 the composition is skewed to basic and acidic residues.

Belongs to the FAD-dependent oxidoreductase 2 family. FRD/SDH subfamily. In terms of assembly, part of an enzyme complex containing four subunits: a flavoprotein (FrdA), an iron-sulfur protein (FrdB), and two hydrophobic anchor proteins (FrdC and FrdD). Interacts with SdhE. It depends on FAD as a cofactor.

Its subcellular location is the cell inner membrane. It catalyses the reaction a quinone + succinate = fumarate + a quinol. It carries out the reaction a menaquinone + succinate = a menaquinol + fumarate. Functionally, two distinct, membrane-bound, FAD-containing enzymes are responsible for the catalysis of fumarate and succinate interconversion; the fumarate reductase is used in anaerobic growth, and the succinate dehydrogenase is used in aerobic growth. The chain is Fumarate reductase flavoprotein subunit from Serratia sp. (strain ATCC 39006) (Prodigiosinella confusarubida).